The primary structure comprises 105 residues: uncharacterized protein (105 aa).

The segment covering 31 to 47 (SVNLPSPSVKPSVTPSV) has biased composition (low complexity). The tract at residues 31 to 80 (SVNLPSPSVKPSVTPSVKKPPHVIRSDYSKPREKPAKVAKKPTVKNDKKP) is disordered. The segment covering 54–66 (IRSDYSKPREKPA) has biased composition (basic and acidic residues).

This is an uncharacterized protein from Caenorhabditis elegans.